Consider the following 103-residue polypeptide: Small ribosomal subunit protein uS10 (103 aa).

The protein belongs to the universal ribosomal protein uS10 family. In terms of assembly, part of the 30S ribosomal subunit.

In terms of biological role, involved in the binding of tRNA to the ribosomes. The protein is Small ribosomal subunit protein uS10 of Cutibacterium acnes (strain DSM 16379 / KPA171202) (Propionibacterium acnes).